We begin with the raw amino-acid sequence, 394 residues long: Deoxyguanosinetriphosphate triphosphohydrolase-like protein (394 aa).

Residues 1 to 36 are disordered; sequence MSQAPYFVPRAPYAEDPSKSKGRRFKEDESRTRTPF. Residues 25–36 show a composition bias toward basic and acidic residues; it reads FKEDESRTRTPF. The HD domain occupies 70–210; that stretch reads RLTHTLEVAQ…AALADDIAYN (141 aa).

Belongs to the dGTPase family. Type 2 subfamily.

This Caulobacter vibrioides (strain ATCC 19089 / CIP 103742 / CB 15) (Caulobacter crescentus) protein is Deoxyguanosinetriphosphate triphosphohydrolase-like protein.